A 162-amino-acid polypeptide reads, in one-letter code: Caveolin-2 (162 aa).

Residues 1-86 (MGLETEKADV…FEISKYVIYK (86 aa)) are Cytoplasmic-facing. Y19 bears the Phosphotyrosine; by SRC mark. Residues S20 and S23 each carry the phosphoserine modification. Phosphotyrosine; by SRC is present on Y27. Residue S36 is modified to Phosphoserine. The segment at residues 87–107 (FLTVFLAIPLAFIAGILFATL) is an intramembrane region (helical). Residues 108-162 (SCLHIWILMPFVKTCLMVLPSVQTIWKSVTDVVIGPLCTSVGRIFSSVSMQLSHD) lie on the Cytoplasmic side of the membrane.

This sequence belongs to the caveolin family. Monomer or homodimer. Interacts with CAV1; the interaction forms a stable heterooligomeric complex that is required for targeting to lipid rafts and for caveolae formation. Tyrosine phosphorylated forms do not form heterooligomers with the Tyr-19-phosphorylated form existing as a monomer or dimer and the Tyr-27-form as a monomer only. Interacts (tyrosine phosphorylated form) with the SH2 domain-containing proteins, RASA1, NCK1 and SRC. Interacts (tyrosine phosphorylated form) with INSR; the interaction (Tyr-27-phosphorylated form) is increased on insulin stimulation. Interacts (Tyr-19-phosphorylated form) with MAPK1 (phosphorylated form); the interaction, promoted by insulin, leads to nuclear location and MAPK1 activation. Interacts with STAT3; the interaction is increased on insulin-induced tyrosine phosphorylation leading to STAT activation. Post-translationally, phosphorylated on serine and tyrosine residues. CAV1 promotes phosphorylation on Ser-23 which targets the complex to the plasma membrane, lipid rafts and caveolae. Phosphorylation on Ser-36 appears to modulate mitosis in endothelial cells. Phosphorylation on both Tyr-19 and Tyr-27 is required for insulin-induced 'Ser-727' phosphorylation of STAT3 and its activation. Phosphorylation on Tyr-19 is required for insulin-induced phosphorylation of MAPK1 and DNA binding of STAT3. Tyrosine phosphorylation is induced by both EGF and insulin. In terms of tissue distribution, in the retina, mainly expressed in vessels, but also diffuse expression in the inner and outer plexiform layers and in the inner nuclear layer.

Its subcellular location is the nucleus. The protein resides in the cytoplasm. It is found in the golgi apparatus membrane. The protein localises to the cell membrane. It localises to the membrane. Its subcellular location is the caveola. Its function is as follows. May act as a scaffolding protein within caveolar membranes. Interacts directly with G-protein alpha subunits and can functionally regulate their activity. Acts as an accessory protein in conjunction with CAV1 in targeting to lipid rafts and driving caveolae formation. The Ser-36 phosphorylated form has a role in modulating mitosis in endothelial cells. Positive regulator of cellular mitogenesis of the MAPK signaling pathway. Required for the insulin-stimulated nuclear translocation and activation of MAPK1 and STAT3, and the subsequent regulation of cell cycle progression. This chain is Caveolin-2 (Cav2), found in Rattus norvegicus (Rat).